Here is a 507-residue protein sequence, read N- to C-terminus: Putative propionyl-CoA carboxylase beta chain (507 aa).

Over residues 1-25 the composition is skewed to basic and acidic residues; it reads MNEHMDHFYTKRKQAEEGGGREKLA. Residues 1–30 form a disordered region; it reads MNEHMDHFYTKRKQAEEGGGREKLAQQRQK. The CoA carboxyltransferase N-terminal domain maps to 1-254; that stretch reads MNEHMDHFYT…NGRTTEPKPE (254 aa). The interval 1–501 is carboxyltransferase; the sequence is MNEHMDHFYT…HKTEERPKKK (501 aa). The region spanning 256 to 501 is the CoA carboxyltransferase C-terminal domain; it reads EASRPLLNRL…HKTEERPKKK (246 aa).

This sequence belongs to the AccD/PCCB family. Probably a dodecamer composed of six biotin-containing alpha subunits and six beta subunits.

The enzyme catalyses propanoyl-CoA + hydrogencarbonate + ATP = (S)-methylmalonyl-CoA + ADP + phosphate + H(+). It functions in the pathway metabolic intermediate metabolism; propanoyl-CoA degradation; succinyl-CoA from propanoyl-CoA: step 1/3. The sequence is that of Putative propionyl-CoA carboxylase beta chain (yqjD) from Bacillus subtilis (strain 168).